Reading from the N-terminus, the 115-residue chain is Peptidyl-tRNA hydrolase (115 aa).

This sequence belongs to the PTH2 family.

Its subcellular location is the cytoplasm. It carries out the reaction an N-acyl-L-alpha-aminoacyl-tRNA + H2O = an N-acyl-L-amino acid + a tRNA + H(+). Functionally, the natural substrate for this enzyme may be peptidyl-tRNAs which drop off the ribosome during protein synthesis. The chain is Peptidyl-tRNA hydrolase from Archaeoglobus fulgidus (strain ATCC 49558 / DSM 4304 / JCM 9628 / NBRC 100126 / VC-16).